The sequence spans 388 residues: 1-deoxy-D-xylulose 5-phosphate reductoisomerase (388 aa).

NADPH is bound by residues Thr10, Gly11, Ser12, Ile13, Asn37, and Asn121. Lys122 is a 1-deoxy-D-xylulose 5-phosphate binding site. Glu123 is an NADPH binding site. Mn(2+) is bound at residue Asp147. The 1-deoxy-D-xylulose 5-phosphate site is built by Ser148, Glu149, Ser173, and His196. Mn(2+) is bound at residue Glu149. Gly202 provides a ligand contact to NADPH. Residues Ser209, Asn214, Lys215, and Glu218 each contribute to the 1-deoxy-D-xylulose 5-phosphate site. Glu218 is a binding site for Mn(2+).

The protein belongs to the DXR family. Requires Mg(2+) as cofactor. Mn(2+) is required as a cofactor.

It catalyses the reaction 2-C-methyl-D-erythritol 4-phosphate + NADP(+) = 1-deoxy-D-xylulose 5-phosphate + NADPH + H(+). It participates in isoprenoid biosynthesis; isopentenyl diphosphate biosynthesis via DXP pathway; isopentenyl diphosphate from 1-deoxy-D-xylulose 5-phosphate: step 1/6. Its function is as follows. Catalyzes the NADPH-dependent rearrangement and reduction of 1-deoxy-D-xylulose-5-phosphate (DXP) to 2-C-methyl-D-erythritol 4-phosphate (MEP). In Lachnoclostridium phytofermentans (strain ATCC 700394 / DSM 18823 / ISDg) (Clostridium phytofermentans), this protein is 1-deoxy-D-xylulose 5-phosphate reductoisomerase.